A 1136-amino-acid chain; its full sequence is Solute carrier family 12 member 2 (1136 aa).

2 disordered regions span residues 1–73 (MSAS…SVSG) and 91–121 (PDAA…QQHH). Residues 1–208 (MSASPPISAG…SESKGVVKFG (208 aa)) lie on the Cytoplasmic side of the membrane. Phosphothreonine is present on residues T125, T129, T134, T139, and T152. The discontinuously helical transmembrane segment at 209–234 (WIKGVLVRCMLNIWGVMLFIRMTWIV) threads the bilayer. L219 provides a ligand contact to Na(+). K(+) contacts are provided by N220 and I221. W222 serves as a coordination point for Na(+). Chloride is bound by residues G223, V224, and M225. At 235–238 (GQAG) the chain is on the extracellular side. The chain crosses the membrane as a helical span at residues 239–261 (IAYSCIIVIMATVVTTITGCSTS). Topologically, residues 262–285 (AIATNGFVRGGGAYYLISRSLGPE) are cytoplasmic. The chain crosses the membrane as a helical span at residues 286–314 (FGGSIGLIFAFANAVAVAMYVVGFAETVV). Residue F294 participates in chloride binding. Residue Y305 coordinates K(+). The Extracellular portion of the chain corresponds to 315–327 (ELLMDSGLLMIDQ). Transmembrane regions (helical) follow at residues 328–351 (TNDI…AGME) and 352–376 (WEAK…IGSF). The Extracellular segment spans residues 377 to 407 (IAVDSKKKFGFFSYDAGILAENFGPDFRGQT). A discontinuously helical membrane pass occupies residues 408–427 (FFSVFSIFFPAATGILAGAN). K(+)-binding residues include P417, A418, and T420. P417 and A418 together coordinate chloride. The chloride site is built by G421 and I422. The Cytoplasmic segment spans residues 428 to 438 (ISGDLADPQMA). The helical transmembrane segment at 439–462 (IPKGTLLAILITGLVYVGVAISAG) threads the bilayer. At 463–523 (ACIVRDATGI…DFQVMSVVSG (61 aa)) the chain is on the extracellular side. N-linked (GlcNAc...) asparagine glycosylation is found at N475 and N481. C496 and C507 are oxidised to a cystine. The chain crosses the membrane as a helical span at residues 524–551 (FSPLISAGIFSATLSSALASLVSAPKVF). The Na(+) site is built by A535, S538, and S539. The Cytoplasmic portion of the chain corresponds to 552-576 (QALCKDNIYPGIAIFGKGYGKNNEP). The next 2 helical transmembrane spans lie at 577 to 595 (LRGY…LIAE) and 596 to 619 (LNVI…FSVF). Residues F607 and Y611 each coordinate chloride. The Cytoplasmic portion of the chain corresponds to 620–636 (HASLANSPGWRPSFKYY). 2 helical membrane-spanning segments follow: residues 637–656 (NMWA…FIIN) and 657–672 (WWAA…SLYI). Over 673–1136 (YVSYKKPDVN…NHQSVLTFYS (464 aa)) the chain is Cytoplasmic. The interval 689 to 702 (ALTYHQALTHSLQL) is scissor helix. Residues 875-921 (SKDSDGDSSKPSSKATSVQNSPAVQKDEDDDGKAHTQPLLKKDKKSP) form a disordered region. T1059 is modified (phosphothreonine).

Belongs to the SLC12A transporter family. In terms of assembly, homodimer; adopts a domain-swap conformation at the scissor helices connecting the transmembrane domain and C-terminal domain. In terms of processing, phosphorylated at Thr-125, Thr-129 and Thr-134 by OXSR1/OSR1 and STK39/SPAK downstream of WNK kinases (WNK1, WNK2, WNK3 or WNK4), promoting its activity.

It is found in the basolateral cell membrane. It carries out the reaction K(+)(out) + 2 chloride(out) + Na(+)(out) = K(+)(in) + 2 chloride(in) + Na(+)(in). With respect to regulation, activated following phosphorylation by OXSR1/OSR1 and STK39/SPAK. Inhibited by bumetanide. Functionally, cation-chloride cotransporter which mediates the electroneutral transport of chloride, potassium and/or sodium ions across the membrane. Plays a vital role in the regulation of ionic balance and cell volume. Important for maintenance of endolymph volume in the otic vesicle, probably by regulating ion homeostasis. Also plays a role in normal development of the swim bladder. The protein is Solute carrier family 12 member 2 of Danio rerio (Zebrafish).